Reading from the N-terminus, the 93-residue chain is Acyl carrier protein AcpXL (93 aa).

In terms of domain architecture, Carrier spans 2–88 (STTFDKVAKI…NLCAKIDALV (87 aa)). An O-(pantetheine 4'-phosphoryl)serine modification is found at serine 37.

In terms of processing, 4'-phosphopantetheine is transferred from CoA to a specific serine of apo-ACP by AcpS. This modification is essential for activity because fatty acids are bound in thioester linkage to the sulfhydryl of the prosthetic group.

The protein localises to the cytoplasm. Its pathway is glycolipid biosynthesis; KDO(2)-lipid A biosynthesis. Functionally, carrier of the growing fatty acid chain in fatty acid biosynthesis. Is involved in the transfer of long hydroxylated fatty acids to lipid A. This is Acyl carrier protein AcpXL (acpXL) from Mesorhizobium japonicum (strain LMG 29417 / CECT 9101 / MAFF 303099) (Mesorhizobium loti (strain MAFF 303099)).